A 135-amino-acid polypeptide reads, in one-letter code: Adult cuticle protein 1 (135 aa).

The N-terminal stretch at 1–19 (MKFAVAVIFTLALAMGVQS) is a signal peptide. 3 consecutive repeat copies span residues 72–75 (AAPA), 78–81 (AAPA), and 128–131 (AAPA).

Detected in the epidermis underlying the head and thorax (including legs and wings), but not in the abdominal epidermis of newly eclosed flies.

Functionally, component of the cuticle of the adult fruit fly. Could be involved in thickening of the hard adult cuticle. This is Adult cuticle protein 1 (Acp1) from Drosophila melanogaster (Fruit fly).